The following is a 128-amino-acid chain: UPF0102 protein MAV_3752 (128 aa).

Belongs to the UPF0102 family.

This is UPF0102 protein MAV_3752 from Mycobacterium avium (strain 104).